The primary structure comprises 161 residues: uncharacterized protein (161 aa).

Helical transmembrane passes span 22–42, 43–63, 89–109, and 110–130; these read LFFINVGLAAVAMLVAGVFGH, LTVGMFLGLGLLLGLLNALLV, LAIITILGLIIAYIFRPAGLG, and VVFGLAFFQVLLVATTALPVL. A disordered region spans residues 141–161; it reads VATYSSNGQTGGSEGRSASDD.

It to M.leprae ML1138.

The protein resides in the cell membrane. This is an uncharacterized protein from Mycobacterium bovis (strain ATCC BAA-935 / AF2122/97).